Reading from the N-terminus, the 1099-residue chain is Contactin-5 (1099 aa).

A signal peptide spans 1 to 18 (MASSWRLILFLSFTSCLS). 6 consecutive Ig-like C2-type domains span residues 99-190 (PVFV…ATLQ), 196-282 (NFSG…RVLS), 300-385 (PKIE…GQLQ), 390-474 (PHWV…AELK), 480-569 (PSFE…VSVK), and 571-660 (PTRI…DSVS). Cysteine 123 and cysteine 173 form a disulfide bridge. Residues asparagine 138 and asparagine 196 are each glycosylated (N-linked (GlcNAc...) asparagine). Disulfide bonds link cysteine 217–cysteine 269 and cysteine 322–cysteine 369. N-linked (GlcNAc...) asparagine glycosylation is found at asparagine 397, asparagine 449, and asparagine 540. Disulfide bonds link cysteine 411–cysteine 458, cysteine 503–cysteine 551, and cysteine 593–cysteine 650. Fibronectin type-III domains are found at residues 673 to 771 (PPGV…TNEA), 776 to 873 (APSN…SAEG), 878 to 972 (APTD…TKRH), and 977 to 1067 (PPGN…SYAG). N-linked (GlcNAc...) asparagine glycosylation is found at asparagine 779, asparagine 816, and asparagine 931. The disordered stretch occupies residues 958–983 (YGPPSREVSATTKRHPPSEPPGNLRW). A glycan (N-linked (GlcNAc...) asparagine) is linked at asparagine 1002. Residue serine 1072 is the site of GPI-anchor amidated serine attachment. A propeptide spans 1073 to 1099 (AQSTLHSLSKWSSVTLLLALMLPSSSW) (removed in mature form).

Belongs to the immunoglobulin superfamily. Contactin family. In terms of assembly, interacts with PTPRG. In terms of tissue distribution, specifically expressed in the nervous system. Expressed in cerebrum and cerebellum but at low level in spinal cord. In brain, it is expressed in highly restricted regions at postnatal day 7, such as the auditory pathway, including the cochlear nucleus, superior olive, inferior colliculus, medial geniculate nucleus and auditory cortex. Expressed in the accessory olfactory bulb, glomerular and mitral cell layers in the olfactory bulb, anterior thalamic nuclei, layers II-IV of the cerebral cortex, dentate gyrus of the hippocampus and external granule cells and Purkinje cells of the cerebellum. Also expressed in the piriform cortex, inferior olive and facial nucleus. Weakly or not expressed in other parts of the brain.

It is found in the cell membrane. Its function is as follows. Contactins mediate cell surface interactions during nervous system development. Has some neurite outgrowth-promoting activity in the cerebral cortical neurons but not in hippocampal neurons. Probably involved in neuronal activity in the auditory system. The chain is Contactin-5 (Cntn5) from Rattus norvegicus (Rat).